The chain runs to 441 residues: Amino-acid acetyltransferase (441 aa).

Positions 295–434 constitute an N-acetyltransferase domain; it reads EQVRRATIND…QALYNYQRRS (140 aa).

The protein belongs to the acetyltransferase family. ArgA subfamily. In terms of assembly, homohexamer.

It is found in the cytoplasm. The enzyme catalyses L-glutamate + acetyl-CoA = N-acetyl-L-glutamate + CoA + H(+). The protein operates within amino-acid biosynthesis; L-arginine biosynthesis; N(2)-acetyl-L-ornithine from L-glutamate: step 1/4. This is Amino-acid acetyltransferase from Serratia proteamaculans (strain 568).